A 690-amino-acid chain; its full sequence is Proprotein convertase subtilisin/kexin type 9 (690 aa).

An N-terminal signal peptide occupies residues 1-28 (MGTVRSRRLWWPLPLLLLLLLGPAGARA). Residues 29–150 (QEDDDGDYEE…IEEDSYVFAQ (122 aa)) constitute a propeptide that is removed on maturation. Sulfotyrosine is present on tyrosine 36. Serine 45 carries the phosphoserine modification. An Inhibitor I9 domain is found at 75–147 (TYVVVLKEET…VDYIEEDSYV (73 aa)). The Peptidase S8 domain maps to 153–459 (PWNLERITPA…GWQLFCRTVW (307 aa)). Active-site charge relay system residues include aspartate 184 and histidine 224. 2 cysteine pairs are disulfide-bonded: cysteine 221–cysteine 253 and cysteine 321–cysteine 356. Serine 384 serves as the catalytic Charge relay system. Residues 448–690 (GAGWQLFCRT…HLAQASQELQ (243 aa)) form a C-terminal domain region. 3 disulfides stabilise this stretch: cysteine 455–cysteine 525, cysteine 475–cysteine 524, and cysteine 484–cysteine 507. N-linked (GlcNAc...) asparagine glycosylation is present at asparagine 531. 6 disulfide bridges follow: cysteine 532–cysteine 599, cysteine 550–cysteine 598, cysteine 560–cysteine 586, cysteine 606–cysteine 677, cysteine 624–cysteine 676, and cysteine 633–cysteine 652. Serine 686 carries the phosphoserine modification.

The protein belongs to the peptidase S8 family. Monomer. Can self-associate to form dimers and higher multimers which may have increased LDLR degrading activity. The precursor protein but not the mature protein may form multimers. Interacts with APOB, VLDLR, LRP8/APOER2 and BACE1. The full-length immature form (pro-PCSK9) interacts with SCNN1A, SCNN1B and SCNN1G. The pro-PCSK9 form (via C-terminal domain) interacts with LDLR. Interacts (via the C-terminal domain) with ANXA2 (via repeat Annexin 1); the interaction inhibits the degradation of LDLR. Ca(2+) serves as cofactor. In terms of processing, cleavage by furin and PCSK5 generates a truncated inactive protein that is unable to induce LDLR degradation. Post-translationally, undergoes autocatalytic cleavage in the endoplasmic reticulum to release the propeptide from the N-terminus and the cleavage of the propeptide is strictly required for its maturation and activation. The cleaved propeptide however remains associated with the catalytic domain through non-covalent interactions, preventing potential substrates from accessing its active site. As a result, it is secreted from cells as a propeptide-containing, enzymatically inactive protein. Phosphorylation protects the propeptide against proteolysis.

Its subcellular location is the cytoplasm. It localises to the secreted. The protein localises to the endosome. It is found in the lysosome. The protein resides in the cell surface. Its subcellular location is the endoplasmic reticulum. It localises to the golgi apparatus. With respect to regulation, its proteolytic activity is autoinhibited by the non-covalent binding of the propeptide to the catalytic domain. Inhibited by EGTA. Its function is as follows. Crucial player in the regulation of plasma cholesterol homeostasis. Binds to low-density lipid receptor family members: low density lipoprotein receptor (LDLR), very low density lipoprotein receptor (VLDLR), apolipoprotein E receptor (LRP1/APOER) and apolipoprotein receptor 2 (LRP8/APOER2), and promotes their degradation in intracellular acidic compartments. Acts via a non-proteolytic mechanism to enhance the degradation of the hepatic LDLR through a clathrin LDLRAP1/ARH-mediated pathway. May prevent the recycling of LDLR from endosomes to the cell surface or direct it to lysosomes for degradation. Can induce ubiquitination of LDLR leading to its subsequent degradation. Inhibits intracellular degradation of APOB via the autophagosome/lysosome pathway in a LDLR-independent manner. Involved in the disposal of non-acetylated intermediates of BACE1 in the early secretory pathway. Inhibits epithelial Na(+) channel (ENaC)-mediated Na(+) absorption by reducing ENaC surface expression primarily by increasing its proteasomal degradation. Regulates neuronal apoptosis via modulation of LRP8/APOER2 levels and related anti-apoptotic signaling pathways. This Lagothrix lagotricha (Brown woolly monkey) protein is Proprotein convertase subtilisin/kexin type 9 (PCSK9).